The primary structure comprises 198 residues: tRNA (pseudouridine(54)-N(1))-methyltransferase (198 aa).

L128 lines the S-adenosyl-L-methionine pocket.

Belongs to the methyltransferase superfamily. TrmY family. Homodimer.

It localises to the cytoplasm. It catalyses the reaction pseudouridine(54) in tRNA + S-adenosyl-L-methionine = N(1)-methylpseudouridine(54) in tRNA + S-adenosyl-L-homocysteine + H(+). In terms of biological role, specifically catalyzes the N1-methylation of pseudouridine at position 54 (Psi54) in tRNAs. This chain is tRNA (pseudouridine(54)-N(1))-methyltransferase, found in Haloferax volcanii (strain ATCC 29605 / DSM 3757 / JCM 8879 / NBRC 14742 / NCIMB 2012 / VKM B-1768 / DS2) (Halobacterium volcanii).